A 427-amino-acid polypeptide reads, in one-letter code: Enolase (427 aa).

Gln-163 serves as a coordination point for (2R)-2-phosphoglycerate. Glu-205 (proton donor) is an active-site residue. Residues Asp-242, Glu-285, and Asp-312 each contribute to the Mg(2+) site. Lys-337, Arg-366, Ser-367, and Lys-388 together coordinate (2R)-2-phosphoglycerate. Lys-337 (proton acceptor) is an active-site residue.

The protein belongs to the enolase family. Mg(2+) is required as a cofactor.

Its subcellular location is the cytoplasm. It is found in the secreted. The protein localises to the cell surface. It catalyses the reaction (2R)-2-phosphoglycerate = phosphoenolpyruvate + H2O. The protein operates within carbohydrate degradation; glycolysis; pyruvate from D-glyceraldehyde 3-phosphate: step 4/5. Its function is as follows. Catalyzes the reversible conversion of 2-phosphoglycerate (2-PG) into phosphoenolpyruvate (PEP). It is essential for the degradation of carbohydrates via glycolysis. The chain is Enolase from Rhodopseudomonas palustris (strain HaA2).